The primary structure comprises 159 residues: Lipoprotein LpqH (159 aa).

The first 21 residues, M1–G21, serve as a signal peptide directing secretion. C22 is lipidated: N-palmitoyl cysteine. C22 carries S-diacylglycerol cysteine lipidation. The interval S24–K51 is disordered. Over residues S27–G49 the composition is skewed to low complexity.

This sequence belongs to the mycobacterial 19 kDa antigen family. Modified by Lgt on Cys-22 with an S-linked diacylglycerol with a mixture of C16, C18 and C19 fatty acids, signal peptide is removed by LspA, modifed by Lnt with an amide-linked mixture of C16 and C19 fatty acids.

Its subcellular location is the cell membrane. In terms of biological role, might be involved in ligand transport. A host TLR2 agonist, modifies host gene expression in response to pathogen. The sequence is that of Lipoprotein LpqH (lpqH) from Mycobacterium tuberculosis (strain CDC 1551 / Oshkosh).